We begin with the raw amino-acid sequence, 317 residues long: Forkhead box protein B2 (317 aa).

The fork-head DNA-binding region spans 13–107 (KPPYSYISLT…ENGSFLRRRK (95 aa)).

In terms of tissue distribution, first expressed within the dorsolateral ectoderm, except for the organizer territory. During gastrulation, expressed in 2 ectodermal stripes adjacent to the dorsal midline. With the onset of neurulation, expression shifts first to the neural plate before settling on the bottom of the neural tube, on top of the notochord. Expression is then absent until stage 35, at which stage a pair of cells in the fourth rhombomere in the dorsolateral outer area of the rhombencephalon show expression. This is followed shortly afterwards by expression in a pair of cells in rhombomere 6 at the ventricular side of the rhombencephalon.

The protein localises to the nucleus. Functionally, transcription factor. In Xenopus laevis (African clawed frog), this protein is Forkhead box protein B2.